The chain runs to 432 residues: Glucose-6-phosphate isomerase (432 aa).

Glutamate 283 serves as the catalytic Proton donor. Residues histidine 304 and lysine 418 contribute to the active site.

This sequence belongs to the GPI family.

It localises to the cytoplasm. The catalysed reaction is alpha-D-glucose 6-phosphate = beta-D-fructose 6-phosphate. It functions in the pathway carbohydrate biosynthesis; gluconeogenesis. Its pathway is carbohydrate degradation; glycolysis; D-glyceraldehyde 3-phosphate and glycerone phosphate from D-glucose: step 2/4. Catalyzes the reversible isomerization of glucose-6-phosphate to fructose-6-phosphate. In Rubrobacter xylanophilus (strain DSM 9941 / JCM 11954 / NBRC 16129 / PRD-1), this protein is Glucose-6-phosphate isomerase.